A 176-amino-acid chain; its full sequence is PRL-1 phosphatase (176 aa).

The Tyrosine-protein phosphatase domain occupies 13–166 (APALIEYKGM…YKPKARLKHK (154 aa)). Catalysis depends on Cys109, which acts as the Phosphocysteine intermediate. At Cys173 the chain carries Cysteine methyl ester. Cys173 carries the S-farnesyl cysteine lipid modification. The propeptide at 174 to 176 (SVQ) is removed in mature form.

Belongs to the protein-tyrosine phosphatase family. As to quaternary structure, homotrimer. Interacts with uex, possibly at the plasma membrane. In terms of tissue distribution, expressed in the adult head (at protein level). Expressed in neurons in the antennal lobe and V-glomeruli (at protein level). Expressed in dorsocentral neurons (at protein level).

It localises to the cytoplasm. The protein localises to the cell membrane. It is found in the apicolateral cell membrane. Its subcellular location is the cell projection. The protein resides in the axon. The catalysed reaction is O-phospho-L-tyrosyl-[protein] + H2O = L-tyrosyl-[protein] + phosphate. Its function is as follows. Probable phosphatase. Inhibits growth possibly by negatively regulating Src64B-induced growth. Regulates central nervous system circuit formation and stabilization of synapse-dense terminal arbors. In dorsocentral neurons, regulates synaptogenesis in terminal arbors via modulation of the insulin receptor pathway, likely upstream of Akt1, and via reduction of PtdIns(4,5)P2 (Phosphatidylinositol 4,5-bisphosphate) levels. In the nervous system, plays a protective role together with uex in response to olfactory carbon dioxide stimulation. This is PRL-1 phosphatase from Drosophila melanogaster (Fruit fly).